The primary structure comprises 309 residues: Peptide methionine sulfoxide reductase MsrA/MsrB (309 aa).

The peptide methionine sulfoxide reductase A stretch occupies residues 1-153 (MIYLAGGCFW…PNGYCHIDIN (153 aa)). C8 is an active-site residue. A MsrB domain is found at 170–293 (ATEIKEKLSA…NSLSITFIPK (124 aa)). Residue C282 is the Nucleophile of the active site.

The protein in the N-terminal section; belongs to the MsrA Met sulfoxide reductase family. This sequence in the C-terminal section; belongs to the MsrB Met sulfoxide reductase family.

The enzyme catalyses L-methionyl-[protein] + [thioredoxin]-disulfide + H2O = L-methionyl-(S)-S-oxide-[protein] + [thioredoxin]-dithiol. It catalyses the reaction [thioredoxin]-disulfide + L-methionine + H2O = L-methionine (S)-S-oxide + [thioredoxin]-dithiol. The catalysed reaction is L-methionyl-[protein] + [thioredoxin]-disulfide + H2O = L-methionyl-(R)-S-oxide-[protein] + [thioredoxin]-dithiol. Functionally, has an important function as a repair enzyme for proteins that have been inactivated by oxidation. Catalyzes the reversible oxidation-reduction of methionine sulfoxide in proteins to methionine. In Streptococcus pyogenes serotype M18 (strain MGAS8232), this protein is Peptide methionine sulfoxide reductase MsrA/MsrB (msrAB).